Here is a 213-residue protein sequence, read N- to C-terminus: Cell wall protein PGA62 (213 aa).

An N-terminal signal peptide occupies residues 1 to 18 (MQFSSAVVLSAVAGSALA). Asparagine 22 carries an N-linked (GlcNAc...) asparagine glycan. A disordered region spans residues 120 to 194 (CPLPSTEAPG…APAVSTAEAG (75 aa)). Over residues 145 to 172 (PVPTTAAESSPAKTTAAESSPAQETTPK) the composition is skewed to polar residues. Residues 173–194 (TVAAESSSAETTAPAVSTAEAG) are compositionally biased toward low complexity. The GPI-anchor amidated glycine moiety is linked to residue glycine 194. Positions 195–213 (AAANAVPVAAGLLALAALF) are cleaved as a propeptide — removed in mature form.

Belongs to the HWP1 family. N- and O-glycosylated. Post-translationally, the GPI-anchor is attached to the protein in the endoplasmic reticulum and serves to target the protein to the cell surface. There, the glucosamine-inositol phospholipid moiety is cleaved off and the GPI-modified mannoprotein is covalently attached via its lipidless GPI glycan remnant to the 1,6-beta-glucan of the outer cell wall layer.

The protein localises to the secreted. It localises to the cell wall. It is found in the membrane. Functionally, cell wall protein necessary for cell wall integrity. Plays only a minor role in hyphal morphogenesis and is not critical to biofilm formation. This Candida albicans (strain SC5314 / ATCC MYA-2876) (Yeast) protein is Cell wall protein PGA62 (PGA62).